Here is a 129-residue protein sequence, read N- to C-terminus: Transcription antitermination protein NusB (129 aa).

The protein belongs to the NusB family.

Involved in transcription antitermination. Required for transcription of ribosomal RNA (rRNA) genes. Binds specifically to the boxA antiterminator sequence of the ribosomal RNA (rrn) operons. In Staphylococcus epidermidis (strain ATCC 35984 / DSM 28319 / BCRC 17069 / CCUG 31568 / BM 3577 / RP62A), this protein is Transcription antitermination protein NusB.